Reading from the N-terminus, the 408-residue chain is Peptidase T (408 aa).

Residue H78 coordinates Zn(2+). The active site involves D80. Residue D141 coordinates Zn(2+). Catalysis depends on E175, which acts as the Proton acceptor. E176, D198, and H380 together coordinate Zn(2+).

It belongs to the peptidase M20B family. The cofactor is Zn(2+).

The protein resides in the cytoplasm. It carries out the reaction Release of the N-terminal residue from a tripeptide.. Functionally, cleaves the N-terminal amino acid of tripeptides. The polypeptide is Peptidase T (Clostridium acetobutylicum (strain ATCC 824 / DSM 792 / JCM 1419 / IAM 19013 / LMG 5710 / NBRC 13948 / NRRL B-527 / VKM B-1787 / 2291 / W)).